The sequence spans 337 residues: Holliday junction branch migration complex subunit RuvB (337 aa).

Positions 1–22 (MEDERITSAEVQSPDEENEELS) are disordered. The interval 1–184 (MEDERITSAE…FGIVEHMNYY (184 aa)) is large ATPase domain (RuvB-L). ATP is bound by residues Leu23, Arg24, Gly65, Lys68, Thr69, Thr70, 131-133 (EDF), Arg174, Tyr184, and Arg221. Thr69 contacts Mg(2+). The tract at residues 185 to 255 (NEADLANIVR…LVSQSLKLLQ (71 aa)) is small ATPAse domain (RuvB-S). Residues 258 to 337 (NRGLDRTDKK…LGLIDQYMNK (80 aa)) form a head domain (RuvB-H) region. DNA contacts are provided by Arg313 and Arg318.

Belongs to the RuvB family. As to quaternary structure, homohexamer. Forms an RuvA(8)-RuvB(12)-Holliday junction (HJ) complex. HJ DNA is sandwiched between 2 RuvA tetramers; dsDNA enters through RuvA and exits via RuvB. An RuvB hexamer assembles on each DNA strand where it exits the tetramer. Each RuvB hexamer is contacted by two RuvA subunits (via domain III) on 2 adjacent RuvB subunits; this complex drives branch migration. In the full resolvosome a probable DNA-RuvA(4)-RuvB(12)-RuvC(2) complex forms which resolves the HJ.

The protein localises to the cytoplasm. It catalyses the reaction ATP + H2O = ADP + phosphate + H(+). Functionally, the RuvA-RuvB-RuvC complex processes Holliday junction (HJ) DNA during genetic recombination and DNA repair, while the RuvA-RuvB complex plays an important role in the rescue of blocked DNA replication forks via replication fork reversal (RFR). RuvA specifically binds to HJ cruciform DNA, conferring on it an open structure. The RuvB hexamer acts as an ATP-dependent pump, pulling dsDNA into and through the RuvAB complex. RuvB forms 2 homohexamers on either side of HJ DNA bound by 1 or 2 RuvA tetramers; 4 subunits per hexamer contact DNA at a time. Coordinated motions by a converter formed by DNA-disengaged RuvB subunits stimulates ATP hydrolysis and nucleotide exchange. Immobilization of the converter enables RuvB to convert the ATP-contained energy into a lever motion, pulling 2 nucleotides of DNA out of the RuvA tetramer per ATP hydrolyzed, thus driving DNA branch migration. The RuvB motors rotate together with the DNA substrate, which together with the progressing nucleotide cycle form the mechanistic basis for DNA recombination by continuous HJ branch migration. Branch migration allows RuvC to scan DNA until it finds its consensus sequence, where it cleaves and resolves cruciform DNA. In Pediococcus pentosaceus (strain ATCC 25745 / CCUG 21536 / LMG 10740 / 183-1w), this protein is Holliday junction branch migration complex subunit RuvB.